The chain runs to 66 residues: ATP synthase F(0) complex subunit 8 (66 aa).

The chain crosses the membrane as a helical span at residues 8–24 (IWLLAVVIVLTTLMIFL). The residue at position 54 (Lys-54) is an N6-acetyllysine; alternate. N6-succinyllysine; alternate is present on Lys-54. Lys-57 bears the N6-acetyllysine mark.

This sequence belongs to the ATPase protein 8 family. In terms of assembly, component of the ATP synthase complex composed at least of ATP5F1A/subunit alpha, ATP5F1B/subunit beta, ATP5MC1/subunit c (homooctomer), MT-ATP6/subunit a, MT-ATP8/subunit 8, ATP5ME/subunit e, ATP5MF/subunit f, ATP5MG/subunit g, ATP5MK/subunit k, ATP5MJ/subunit j, ATP5F1C/subunit gamma, ATP5F1D/subunit delta, ATP5F1E/subunit epsilon, ATP5PF/subunit F6, ATP5PB/subunit b, ATP5PD/subunit d, ATP5PO/subunit OSCP. ATP synthase complex consists of a soluble F(1) head domain (subunits alpha(3) and beta(3)) - the catalytic core - and a membrane F(0) domain - the membrane proton channel (subunits c, a, 8, e, f, g, k and j). These two domains are linked by a central stalk (subunits gamma, delta, and epsilon) rotating inside the F1 region and a stationary peripheral stalk (subunits F6, b, d, and OSCP). Interacts with PRICKLE3.

The protein localises to the mitochondrion membrane. Its function is as follows. Subunit 8, of the mitochondrial membrane ATP synthase complex (F(1)F(0) ATP synthase or Complex V) that produces ATP from ADP in the presence of a proton gradient across the membrane which is generated by electron transport complexes of the respiratory chain. ATP synthase complex consist of a soluble F(1) head domain - the catalytic core - and a membrane F(1) domain - the membrane proton channel. These two domains are linked by a central stalk rotating inside the F(1) region and a stationary peripheral stalk. During catalysis, ATP synthesis in the catalytic domain of F(1) is coupled via a rotary mechanism of the central stalk subunits to proton translocation. In vivo, can only synthesize ATP although its ATP hydrolase activity can be activated artificially in vitro. Part of the complex F(0) domain. This chain is ATP synthase F(0) complex subunit 8, found in Loxodonta africana (African elephant).